The primary structure comprises 78 residues: Acyl carrier protein (78 aa).

The Carrier domain occupies 2–77; that stretch reads SDTVERVKKI…DAVKFIDKAS (76 aa). An O-(pantetheine 4'-phosphoryl)serine modification is found at serine 37.

The protein belongs to the acyl carrier protein (ACP) family. In terms of processing, 4'-phosphopantetheine is transferred from CoA to a specific serine of apo-ACP by AcpS. This modification is essential for activity because fatty acids are bound in thioester linkage to the sulfhydryl of the prosthetic group.

The protein resides in the cytoplasm. It participates in lipid metabolism; fatty acid biosynthesis. Carrier of the growing fatty acid chain in fatty acid biosynthesis. The polypeptide is Acyl carrier protein (Bartonella quintana (strain Toulouse) (Rochalimaea quintana)).